Consider the following 456-residue polypeptide: Cyclic AMP-responsive element-binding protein 3-like protein 3 (456 aa).

Disordered stretches follow at residues 1–20 and 47–120; these read MDGD…MGPI and GHGE…KGPC. The Cytoplasmic portion of the chain corresponds to 1-317; sequence MDGDLAIGKM…STSKSAQTGT (317 aa). A compositionally biased stretch (polar residues) spans 71–85; the sequence is DSDSPTWSPAASDSG. Residues 238 to 301 form the bZIP domain; the sequence is MLKKIRRKIR…LSLLEQLKKL (64 aa). The segment at 240-269 is basic motif; sequence KKIRRKIRNKQSAQESRKKKKEYIDGLETR. The tract at residues 280–301 is leucine-zipper; that stretch reads LQRKVLHLEKQNLSLLEQLKKL. Residue Lys289 forms a Glycyl lysine isopeptide (Lys-Gly) (interchain with G-Cter in ubiquitin) linkage. A helical; Signal-anchor for type II membrane protein membrane pass occupies residues 318–338; the sequence is CIAVLLFSFALIVLPSISPFA. At 339–456 the chain is on the lumenal side; that stretch reads SNRAESPGDF…VGLEAAGGEL (118 aa). Disordered regions lie at residues 365–423 and 435–456; these read RVAP…QGNS and CAPP…GGEL. N-linked (GlcNAc...) asparagine glycans are attached at residues Asn408 and Asn415.

It belongs to the bZIP family. ATF subfamily. In terms of assembly, binds DNA as a dimer. May form homodimers. Interacts with ATF6. Interacts with SYNV1/HRD1; this interaction leads to CREB3L3 ubiquitination and proteasomal degradation. In terms of processing, controlled by regulated intramembrane proteolysis (RIP). Following ER stress a fragment containing the cytoplasmic transcription factor domain is released by proteolysis. The cleavage seems to be performed sequentially by site-1 and site-2 proteases (PS1 and PS2). Post-translationally, N-glycosylation is required for optimal proteolytic activation. Ubiquitinated at Lys-289 by SYNV1/HRD1 via 'Lys-27'-linked ubiquitin.

It is found in the endoplasmic reticulum membrane. The protein resides in the nucleus. Its function is as follows. Transcription factor that may act during endoplasmic reticulum stress by activating unfolded protein response target genes. Activated in response to cAMP stimulation. In vitro, binds the cAMP response element (CRE). Activates transcription through box-B element and CRE. Seems to function synergistically with ATF6. In acute inflammatory response, may activate expression of acute phase response (APR) genes. May be involved in growth suppression. Regulates FGF21 transcription. Plays a crucial role in the regulation of triglyceride metabolism and is required for the maintenance of normal plasma triglyceride concentrations. The protein is Cyclic AMP-responsive element-binding protein 3-like protein 3 (CREB3L3) of Bos taurus (Bovine).